We begin with the raw amino-acid sequence, 437 residues long: Matrix remodeling-associated protein 8 (437 aa).

The first 22 residues, 1-22, serve as a signal peptide directing secretion; sequence MEQLAKLLLWQLLLQQSSVVYL. Over 23–339 the chain is Extracellular; that stretch reads YSVPADASNP…PESRIHFFQQ (317 aa). 2 Ig-like V-type domains span residues 32–159 and 167–294; these read PDSV…LDIT and EYWD…VFVT. N-linked (GlcNAc...) asparagine glycans are attached at residues Asn41, Asn121, Asn246, and Asn304. Intrachain disulfides connect Cys54–Cys139 and Cys188–Cys274. Residues 340–360 form a helical membrane-spanning segment; sequence LGYVLATLLLFVVLLIIVVFI. Residues 361–437 are Cytoplasmic-facing; the sequence is TRKRRQRGYE…DKDFRKEYCK (77 aa).

Homodimer in cis. Does not appear to form trans-homodimers.

Its subcellular location is the cell membrane. Transmembrane protein which can modulate activity of various signaling pathways, probably via binding to integrin ITGAV:ITGB3. Mediates heterophilic cell-cell interactions in vitro. In Gallus gallus (Chicken), this protein is Matrix remodeling-associated protein 8 (MXRA8).